Reading from the N-terminus, the 417-residue chain is Multifunctional CCA protein (417 aa).

The ATP site is built by G8 and R11. Positions 8 and 11 each coordinate CTP. The Mg(2+) site is built by D21 and D23. Residues R91, R137, and R140 each contribute to the ATP site. 3 residues coordinate CTP: R91, R137, and R140. The region spanning 225–326 (SGIHTLMTLQ…LNVLKKTDAF (102 aa)) is the HD domain.

Belongs to the tRNA nucleotidyltransferase/poly(A) polymerase family. Bacterial CCA-adding enzyme type 1 subfamily. Monomer. Can also form homodimers and oligomers. Mg(2+) serves as cofactor. The cofactor is Ni(2+).

It catalyses the reaction a tRNA precursor + 2 CTP + ATP = a tRNA with a 3' CCA end + 3 diphosphate. The catalysed reaction is a tRNA with a 3' CCA end + 2 CTP + ATP = a tRNA with a 3' CCACCA end + 3 diphosphate. In terms of biological role, catalyzes the addition and repair of the essential 3'-terminal CCA sequence in tRNAs without using a nucleic acid template. Adds these three nucleotides in the order of C, C, and A to the tRNA nucleotide-73, using CTP and ATP as substrates and producing inorganic pyrophosphate. tRNA 3'-terminal CCA addition is required both for tRNA processing and repair. Also involved in tRNA surveillance by mediating tandem CCA addition to generate a CCACCA at the 3' terminus of unstable tRNAs. While stable tRNAs receive only 3'-terminal CCA, unstable tRNAs are marked with CCACCA and rapidly degraded. In Neisseria meningitidis serogroup C / serotype 2a (strain ATCC 700532 / DSM 15464 / FAM18), this protein is Multifunctional CCA protein.